The following is a 223-amino-acid chain: Transcriptional regulatory protein HprR (223 aa).

Residues 2-115 (KILLIEDNQR…ELLARVRAQL (114 aa)) form the Response regulatory domain. Aspartate 51 carries the post-translational modification 4-aspartylphosphate. The segment at residues 122–220 (NSTLEISGLR…IRGMGYSFVA (99 aa)) is a DNA-binding region (ompR/PhoB-type).

Post-translationally, phosphorylated by HprS.

The protein resides in the cytoplasm. In terms of biological role, member of a two-component regulatory system HprR/HprS involved in response to hydrogen peroxide. Regulates the expression of at least 5 operons, cyoABCDE, hprRS, hiuH, cusRS and cusCFBA. Bifunctional regulator that acts as an activator and a repressor. The polypeptide is Transcriptional regulatory protein HprR (Escherichia coli (strain K12)).